A 1134-amino-acid chain; its full sequence is Sterol regulatory element-binding protein 1 (1134 aa).

Positions 1-60 are transcriptional activation (acidic); that stretch reads MDELAFGEAALEQTLAEMCELDTAVLNDIEDMLQLINNQDSDFPGLFDAPYAGGETGDTG. Residues 1–477 are Cytoplasmic-facing; sequence MDELAFGEAA…HSRGMLDRSR (477 aa). A 9aaTAD motif is present at residues 27–35; the sequence is NDIEDMLQL. A disordered region spans residues 46-73; sequence LFDAPYAGGETGDTGPSSPGANSPESFS. The segment covering 59–69 has biased composition (polar residues); sequence TGPSSPGANSP. Phosphoserine is present on residues serine 96 and serine 115. Disordered regions lie at residues 130-149 and 170-195; these read LQPAAPQPSPGTLLPPSFPA and SGTLPGNTQQPPSSLPLAPAPGVLPT. A compositionally biased stretch (polar residues) spans 170–179; it reads SGTLPGNTQQ. The tract at residues 227–487 is interaction with LMNA; it reads QQVPVVLQPH…LALCVLAFLC (261 aa). Residues 317-367 form the bHLH domain; it reads EKRTAHNAIEKRYRSSINDKIVELKDLVVGTEAKLNKSAVLRKAIDYIRFL. Phosphoserine; by SIK1 occurs at positions 331 and 332. The interval 367–388 is leucine-zipper; it reads LQHSNQKLKQENLTLRSAHKSK. Serine 389 carries the phosphoserine; by AMPK modification. Serine 395 carries the post-translational modification Phosphoserine; by SIK1. The interval 415 to 468 is disordered; it reads VETLTPPPSDAGSPSQSSPLSFGSRASSSGGSDSEPDSPAFEDSQVKAQRLPSH. Residues 424-453 show a composition bias toward low complexity; that stretch reads DAGSPSQSSPLSFGSRASSSGGSDSEPDSP. At serine 448 the chain carries Phosphoserine. A helical transmembrane segment spans residues 478–498; that stretch reads LALCVLAFLCLTCNPLASLFG. Residues 499 to 536 are Lumenal-facing; that stretch reads WGILTPSDATGTHRSSGRSMLEAESRDGSNWTQWLLPP. The helical transmembrane segment at 537–557 threads the bilayer; it reads LVWLANGLLVLACLALLFVYG. Over 558-1134 the chain is Cytoplasmic; sequence EPVTRPHSGP…LGGGTTVTSS (577 aa). Position 1047 is a phosphoserine (serine 1047).

The protein belongs to the SREBP family. Forms a tight complex with SCAP, the SCAP-SREBP complex, in the endoplasmic reticulum membrane and the Golgi apparatus. Interacts with PAQR3; the interaction anchors the SCAP-SREBP complex to the Golgi apparatus in low cholesterol conditions. As to quaternary structure, efficient DNA binding of the soluble transcription factor fragment requires dimerization with another bHLH protein. Interacts with CEBPA, the interaction produces a transcriptional synergy. Interacts with LMNA. Processed in the Golgi apparatus, releasing the protein from the membrane. At low cholesterol the SCAP-SREBP complex is recruited into COPII vesicles for export from the endoplasmic reticulum. In the Golgi, complex SREBPs are cleaved sequentially by site-1 (MBTPS1, S1P) and site-2 (MBTPS2, S2P) proteases. The first cleavage by site-1 protease occurs within the luminal loop, the second cleavage by site-2 protease occurs within the first transmembrane domain, releasing the transcription factor from the Golgi membrane. Post-translationally, phosphorylated by AMPK, leading to suppress protein processing and nuclear translocation, and repress target gene expression. Phosphorylation at Ser-389 by SIK1 represses activity possibly by inhibiting DNA-binding. In terms of processing, SCAP-free SREBF1 is ubiquitinated by the BCR(ARMC5) complex, leading to its degradation. Ubiquitinated; the nuclear form has a rapid turnover and is rapidly ubiquitinated and degraded by the proteasome in the nucleus. In terms of tissue distribution, predominant isoform expressed in most tissues. Predominates in liver, adrenal gland, brain and adipose tissue. Also found in kidney, thymus, testis, muscle, jejunum, and ileum. As to expression, expressed only in select tissues, such as intestinal epithelial, heart, macrophage and bone marrow dendritic cells. Also found in kidney, thymus, testis, muscle, jejunum, and ileum.

It is found in the endoplasmic reticulum membrane. Its subcellular location is the golgi apparatus membrane. It localises to the cytoplasmic vesicle. The protein resides in the COPII-coated vesicle membrane. The protein localises to the nucleus. Activation by cleavage is down-regulated upon activation of SIRT3-dependent PRKAA1/AMPK-alpha signaling cascade which leads to inhibition of ATP-consuming lipogenesis to restore cellular energy balance. In terms of biological role, precursor of the transcription factor form (Processed sterol regulatory element-binding protein 1), which is embedded in the endoplasmic reticulum membrane. Low sterol concentrations promote processing of this form, releasing the transcription factor form that translocates into the nucleus and activates transcription of genes involved in cholesterol biosynthesis and lipid homeostasis. Its function is as follows. Key transcription factor that regulates expression of genes involved in cholesterol biosynthesis and lipid homeostasis. Binds to the sterol regulatory element 1 (SRE-1) (5'-ATCACCCCAC-3'). Has dual sequence specificity binding to both an E-box motif (5'-ATCACGTGA-3') and to SRE-1 (5'-ATCACCCCAC-3'). Regulates the promoters of genes involved in cholesterol biosynthesis and the LDL receptor (LDLR) pathway of sterol regulation. Functionally, isoform expressed only in select tissues, which has higher transcriptional activity compared to SREBP-1C. Able to stimulate both lipogenic and cholesterogenic gene expression. Has a role in the nutritional regulation of fatty acids and triglycerides in lipogenic organs such as the liver. Required for innate immune response in macrophages by regulating lipid metabolism. Predominant isoform expressed in most tissues, which has weaker transcriptional activity compared to isoform SREBP-1A. Primarily controls expression of lipogenic gene. Strongly activates global lipid synthesis in rapidly growing cells. The sequence is that of Sterol regulatory element-binding protein 1 from Mus musculus (Mouse).